A 458-amino-acid polypeptide reads, in one-letter code: NALCN channel auxiliary factor 1 (458 aa).

A helical transmembrane segment spans residues 40–60; the sequence is LSLASLLFFTVLLSDHLWFCA. Residues 70-155 form a disordered region; sequence KEHQQQQRQQ…NRGKDDRGKA (86 aa). Over residues 75–96 the composition is skewed to low complexity; the sequence is QQRQQQQQQQQQRQRQQQQQQR. A compositionally biased stretch (gly residues) spans 136 to 145; that stretch reads GDGGGGGGKG. Disulfide bonds link Cys191–Cys261, Cys226–Cys313, Cys246–Cys261, Cys304–Cys341, Cys324–Cys377, Cys330–Cys376, and Cys334–Cys361. Residue Asn217 is glycosylated (N-linked (GlcNAc...) asparagine). The helical transmembrane segment at 417-437 threads the bilayer; it reads LKLCVLVLILLHTVLTASAAQ.

This sequence belongs to the NALF family. In terms of assembly, component of the NALCN channel complex. NALCN complex consists of NALCN and auxiliary subunits, UNC79, UNC80 and NACL1. These auxiliary subunits are essential for the NALCN channel function.

It localises to the cell membrane. Its function is as follows. Auxillary component of the NALCN sodium channel complex, a channel that regulates the resting membrane potential and controls neuronal excitability. The sequence is that of NALCN channel auxiliary factor 1 from Homo sapiens (Human).